Reading from the N-terminus, the 347-residue chain is Holliday junction branch migration complex subunit RuvB (347 aa).

The interval 1–183 is large ATPase domain (RuvB-L); the sequence is MSDERVVTPR…FGSVHRLEFY (183 aa). ATP is bound by residues leucine 22, arginine 23, glycine 64, lysine 67, threonine 68, serine 69, 130–132, arginine 173, tyrosine 183, and arginine 220; that span reads EDF. Position 68 (threonine 68) interacts with Mg(2+). The segment at 184-254 is small ATPAse domain (RuvB-S); sequence SVDALYEIVM…VARDALAKLE (71 aa). Positions 257–347 are head domain (RuvB-H); it reads HLGLDENDRR…NGAEQGRLWT (91 aa). The DNA site is built by arginine 312 and arginine 317.

The protein belongs to the RuvB family. Homohexamer. Forms an RuvA(8)-RuvB(12)-Holliday junction (HJ) complex. HJ DNA is sandwiched between 2 RuvA tetramers; dsDNA enters through RuvA and exits via RuvB. An RuvB hexamer assembles on each DNA strand where it exits the tetramer. Each RuvB hexamer is contacted by two RuvA subunits (via domain III) on 2 adjacent RuvB subunits; this complex drives branch migration. In the full resolvosome a probable DNA-RuvA(4)-RuvB(12)-RuvC(2) complex forms which resolves the HJ.

Its subcellular location is the cytoplasm. It carries out the reaction ATP + H2O = ADP + phosphate + H(+). The RuvA-RuvB-RuvC complex processes Holliday junction (HJ) DNA during genetic recombination and DNA repair, while the RuvA-RuvB complex plays an important role in the rescue of blocked DNA replication forks via replication fork reversal (RFR). RuvA specifically binds to HJ cruciform DNA, conferring on it an open structure. The RuvB hexamer acts as an ATP-dependent pump, pulling dsDNA into and through the RuvAB complex. RuvB forms 2 homohexamers on either side of HJ DNA bound by 1 or 2 RuvA tetramers; 4 subunits per hexamer contact DNA at a time. Coordinated motions by a converter formed by DNA-disengaged RuvB subunits stimulates ATP hydrolysis and nucleotide exchange. Immobilization of the converter enables RuvB to convert the ATP-contained energy into a lever motion, pulling 2 nucleotides of DNA out of the RuvA tetramer per ATP hydrolyzed, thus driving DNA branch migration. The RuvB motors rotate together with the DNA substrate, which together with the progressing nucleotide cycle form the mechanistic basis for DNA recombination by continuous HJ branch migration. Branch migration allows RuvC to scan DNA until it finds its consensus sequence, where it cleaves and resolves cruciform DNA. This Roseiflexus castenholzii (strain DSM 13941 / HLO8) protein is Holliday junction branch migration complex subunit RuvB.